Here is a 320-residue protein sequence, read N- to C-terminus: MLYKRNPQLNKNGELIHLLSIEGLPKDIVTHILDTAANFTSVSDREVKKVPLLRGKSVFNLFFENSTRTRTTFEIAAKRLSADVINLDIARSSATKGESLLDTIANLSAMAADLFVVRHSESGAPYLIAQHVAPHVHVVNAGDGRHAHPTQGLLDMYTIRHYKKDFANLTVAIVGDVLHSRVARSDIHALTTLGCAEVRVVGPKTLVPGDMAGMGVRVCHTLEEGIRDCDVIIMLRLQNERMSGALLPSSQEFFKTYGLTPEKLQLAKSDAIVMHPGPINRGVEIDSAVVDGKQSVILPQVTFGIAVRMAVMSIVAGNEA.

Residues Arg-68 and Thr-69 each coordinate carbamoyl phosphate. Lys-96 serves as a coordination point for L-aspartate. The carbamoyl phosphate site is built by Arg-118, His-148, and Gln-151. Arg-181 and Arg-236 together coordinate L-aspartate. 2 residues coordinate carbamoyl phosphate: Gly-277 and Pro-278.

Belongs to the aspartate/ornithine carbamoyltransferase superfamily. ATCase family. In terms of assembly, heterododecamer (2C3:3R2) of six catalytic PyrB chains organized as two trimers (C3), and six regulatory PyrI chains organized as three dimers (R2).

The catalysed reaction is carbamoyl phosphate + L-aspartate = N-carbamoyl-L-aspartate + phosphate + H(+). It participates in pyrimidine metabolism; UMP biosynthesis via de novo pathway; (S)-dihydroorotate from bicarbonate: step 2/3. Catalyzes the condensation of carbamoyl phosphate and aspartate to form carbamoyl aspartate and inorganic phosphate, the committed step in the de novo pyrimidine nucleotide biosynthesis pathway. The sequence is that of Aspartate carbamoyltransferase catalytic subunit from Variovorax paradoxus (strain S110).